The following is a 342-amino-acid chain: Phenylalanine--tRNA ligase alpha subunit (342 aa).

Residue Glu257 coordinates Mg(2+).

It belongs to the class-II aminoacyl-tRNA synthetase family. Phe-tRNA synthetase alpha subunit type 1 subfamily. In terms of assembly, tetramer of two alpha and two beta subunits. Mg(2+) is required as a cofactor.

Its subcellular location is the cytoplasm. The catalysed reaction is tRNA(Phe) + L-phenylalanine + ATP = L-phenylalanyl-tRNA(Phe) + AMP + diphosphate + H(+). This Chlamydia trachomatis serovar D (strain ATCC VR-885 / DSM 19411 / UW-3/Cx) protein is Phenylalanine--tRNA ligase alpha subunit (pheS).